The chain runs to 438 residues: Methyl-coenzyme M reductase subunit beta (438 aa).

A coenzyme M-binding site is contributed by Tyr-367. Gly-369 is a binding site for coenzyme B.

The protein belongs to the methyl-coenzyme M reductase beta subunit family. In terms of assembly, MCR is a hexamer of two alpha, two beta, and two gamma chains, forming a dimer of heterotrimers. Requires coenzyme F430 as cofactor.

It is found in the cytoplasm. It carries out the reaction coenzyme B + methyl-coenzyme M = methane + coenzyme M-coenzyme B heterodisulfide. The protein operates within one-carbon metabolism; methyl-coenzyme M reduction; methane from methyl-coenzyme M: step 1/1. Its function is as follows. Component of the methyl-coenzyme M reductase (MCR) I that catalyzes the reductive cleavage of methyl-coenzyme M (CoM-S-CH3 or 2-(methylthio)ethanesulfonate) using coenzyme B (CoB or 7-mercaptoheptanoylthreonine phosphate) as reductant which results in the production of methane and the mixed heterodisulfide of CoB and CoM (CoM-S-S-CoB). This is the final step in methanogenesis. In Methanothermus fervidus, this protein is Methyl-coenzyme M reductase subunit beta (mcrB).